We begin with the raw amino-acid sequence, 740 residues long: Cell death abnormality protein 12 (740 aa).

Residues 348–494 (SEIQKVLDID…FVLEQLRHVL (147 aa)) form the ELMO domain. A required for punctate localization, cell corpse engulfment and distal cell tip migration region spans residues 555–690 (INHLNYLKKG…ESLAYLVGNT (136 aa)). Positions 724-727 (PDVP) match the SH3-binding motif.

In terms of assembly, interacts with psr-1. Forms a ternary complex with ced-2 and ced-5.

The protein resides in the cytoplasm. In terms of biological role, involved in apoptosis and necrosis. Required for the cell corpse engulfment process. Has roles in the formation of actin halos and distal tip cell migration. Plays no role in amphid axon outgrowth. The chain is Cell death abnormality protein 12 from Caenorhabditis briggsae.